A 198-amino-acid chain; its full sequence is Probable GTP-binding protein EngB (198 aa).

The 175-residue stretch at 21-195 folds into the EngB-type G domain; the sequence is NFSEVAFLGR…EDIIINQTLG (175 aa). GTP-binding positions include 29–36, 56–60, 81–84, 151–154, and 174–176; these read GRSNVGKS, GKTQL, DLPG, TKCD, and VSN. Positions 36 and 58 each coordinate Mg(2+).

This sequence belongs to the TRAFAC class TrmE-Era-EngA-EngB-Septin-like GTPase superfamily. EngB GTPase family. Mg(2+) is required as a cofactor.

Its function is as follows. Necessary for normal cell division and for the maintenance of normal septation. This Campylobacter jejuni subsp. jejuni serotype O:2 (strain ATCC 700819 / NCTC 11168) protein is Probable GTP-binding protein EngB.